The chain runs to 308 residues: Glutathione synthetase (308 aa).

Residues 117-300 (KLLPLSFPKF…LERDCWDYFE (184 aa)) enclose the ATP-grasp domain. Residue 143 to 198 (YAEYGDIVLKPLYDYGGNGVCRICGRADVGAISSAMVERYEAPLVAQQFIDDISSD) coordinates ATP. E271 and N273 together coordinate Mg(2+).

It belongs to the prokaryotic GSH synthase family. Mg(2+) serves as cofactor. Requires Mn(2+) as cofactor.

It carries out the reaction gamma-L-glutamyl-L-cysteine + glycine + ATP = glutathione + ADP + phosphate + H(+). It participates in sulfur metabolism; glutathione biosynthesis; glutathione from L-cysteine and L-glutamate: step 2/2. This is Glutathione synthetase from Anaplasma centrale.